Here is a 557-residue protein sequence, read N- to C-terminus: Tight junction-associated protein 1 (557 aa).

Residues 1-37 (MTSAAPAKKPYRKAPPEHRELRLEIPGSRLEQEEPLT) are disordered. Thr2 carries the post-translational modification N-acetylthreonine. Over residues 14–23 (APPEHRELRL) the composition is skewed to basic and acidic residues. A coiled-coil region spans residues 42-171 (MKLLQEENEE…EELNERYRLD (130 aa)). Disordered stretches follow at residues 266–303 (MSEG…SPEE) and 309–328 (AFEK…LYPG). Residues 274–286 (PASPPAPGSPTPQ) show a composition bias toward pro residues. The residue at position 300 (Ser300) is a Phosphoserine. The segment covering 316-325 (YPTPSPPHPL) has biased composition (pro residues). Residue Thr318 is modified to Phosphothreonine. Residues Ser320 and Ser345 each carry the phosphoserine modification. The segment at 364-409 (EEGSERARPSPVPSTPASAQASPHHQPSPAPLTLSAPASSASSEED) is disordered. Residues 378–388 (TPASAQASPHH) are compositionally biased toward polar residues. The span at 394–405 (PLTLSAPASSAS) shows a compositional bias: low complexity. Thr422 is subject to Phosphothreonine. Over residues 439-456 (LPELQRHFAHSPADRDEV) the composition is skewed to basic and acidic residues. Residues 439–557 (LPELQRHFAH…QAQEQGNLLN (119 aa)) form a disordered region. Ser491 is subject to Phosphoserine. The segment covering 530-542 (RSPKRMGVHHLHR) has biased composition (basic residues). Ser545 carries the phosphoserine modification. Residues 546 to 557 (LTQAQEQGNLLN) show a composition bias toward polar residues.

Interacts with DLG1. Interacts with ARF6 (GTP-bound form). In terms of tissue distribution, ubiquitously expressed.

Its subcellular location is the golgi apparatus. The protein resides in the trans-Golgi network. It localises to the cell junction. It is found in the tight junction. The protein localises to the cell membrane. In terms of biological role, plays a role in regulating the structure of the Golgi apparatus. The protein is Tight junction-associated protein 1 of Homo sapiens (Human).